We begin with the raw amino-acid sequence, 630 residues long: PR domain zinc finger protein 5 (630 aa).

An SET domain is found at 8–124; sequence DRFSLKSSRV…TDTELLIGYL (117 aa). The segment at 167 to 190 adopts a C2H2-type 1 zinc-finger fold; that stretch reads YACPQCESSFTSEDILAEHLQTLH. Residues 199 to 221 form a C2H2-type 2; atypical zinc finger; sequence FKCKNCGKKFPVKQALQRHVLQC. A C2H2-type 3; atypical zinc finger spans residues 234–256; the sequence is FQCSVCNSSFSSASSFEQHQETC. 13 C2H2-type zinc fingers span residues 262-287, 295-317, 320-342, 348-370, 376-398, 404-426, 432-455, 461-483, 489-511, 517-539, 545-567, 573-595, and 602-625; these read FVCK…ENVH, LICS…RKIH, FDCQ…MITH, YNCE…KVIH, YKCK…KKTH, FQCE…LLIH, FKCH…QVVH, YRCE…KKTH, KICP…IRSH, YQCP…IRTH, YKCS…KRTH, FQCD…KMTH, and AECQ…DNIH.

The protein belongs to the class V-like SAM-binding methyltransferase superfamily. In terms of assembly, interacts with EHMT2/G9A, GFI1 and HDAC1. Widely expressed with highest levels in colon and ovary. Tends to be silenced in breast, colorectal, gastric and liver cancer tissues.

The protein localises to the nucleus. Sequence-specific DNA-binding transcription factor. Represses transcription at least in part by recruitment of the histone methyltransferase EHMT2/G9A and histone deacetylases such as HDAC1. Regulates hematopoiesis-associated protein-coding and microRNA (miRNA) genes. May regulate the expression of proteins involved in extracellular matrix development and maintenance, including fibrillar collagens, such as COL4A1 and COL11A1, connective tissue components, such as HAPLN1, and molecules regulating cell migration and adhesion, including EDIL3 and TGFB2. May cause G2/M arrest and apoptosis in cancer cells. The protein is PR domain zinc finger protein 5 (PRDM5) of Homo sapiens (Human).